The sequence spans 779 residues: MAEAKTVPVLFLNDSIVLPGMVVPIELDDAARAAVDAARASESGELLIAPRLEDRYPAYGVLASIVQIGRLPNGDAAAVVRGERRAHIGSGTSGPGAALWVQVEEVTDPEPTDETKKLAGEYKKLLLAMLQRRDAWQIVDMVNKITDPSALADTAGYASYLTGTQKRELLETTDVDRRLSLLIGWTGDHLAETEVNDKIAEDVRTGMEKQQKEFLLRQQLAAIRKELGELDDNGDGSSDDYRARIEQADLPEKVREAALREVGKLERASDQSPEGGWIRTWLDTVLDLPWNVRTEDSTDLARAREILDTDHHGLSDVKDRIVEYLAVRGAAPQRGMAVVGGRGSGAVMVLAGPPGVGKTSLGESVARALDRKFVRVALGGVRDEAEIRGHRRTYVGALPGRIVRAIGEAGSMNPVVLLDEIDKVGSDYRGDPAAALLEVLDPAQNHTFRDHYLDLDLDLSDVVFLVTANVIENIPSALLDRMELVEIDGYTADDKLAIAQGFLLPRQRERGGLTSDEVTVTEAALRKIAADYTREPGVRQFERLLAKAMRKAATKLADHPQAAPITIDEPDLVEYLGRPRFLPESAERTAVPGVATGLAVTGLGGDVLYIEANSTEGEPGLQLTGQLGDVMKESAQIAMSYVRAHAKQLGVDPEALNRRIHIHVPAGAVPKDGPSAGVTMVTALVSMATGRKVRGDVGMTGEVTLNGRVLPIGGVKQKLLAAQRAGLSTVFIPQRNQPDLDDVPADVLDALDVRPMTDVADIIAAALEPAHEASTAAAA.

Residues 7 to 190 form the Lon N-terminal domain; sequence VPVLFLNDSI…LLIGWTGDHL (184 aa). An ATP-binding site is contributed by 352-359; that stretch reads GPPGVGKT. Positions 589 to 769 constitute a Lon proteolytic domain; that stretch reads TAVPGVATGL…ADIIAAALEP (181 aa). Active-site residues include Ser-675 and Lys-718.

The protein belongs to the peptidase S16 family. Homohexamer. Organized in a ring with a central cavity. Oligomerization is Mg(2+)-dependent.

Its subcellular location is the cytoplasm. It carries out the reaction Hydrolysis of proteins in presence of ATP.. Its activity is regulated as follows. Stimulated by unfolded protein. ATP-dependent serine protease that mediates the selective degradation of mutant and abnormal proteins as well as certain short-lived regulatory proteins. Required for cellular homeostasis and for survival from DNA damage and developmental changes induced by stress. Degrades polypeptides processively to yield small peptide fragments that are 5 to 10 amino acids long. Binds to DNA in a double-stranded, site-specific manner. This is Lon protease from Mycolicibacterium smegmatis (Mycobacterium smegmatis).